A 403-amino-acid chain; its full sequence is Na(+)-translocating NADH-quinone reductase subunit B (403 aa).

3 consecutive transmembrane segments (helical) span residues 56 to 76 (IMIM…YNIG), 114 to 134 (LAMF…TFIV), and 165 to 185 (LPAT…VVIA). Thr-231 is subject to FMN phosphoryl threonine. 5 helical membrane passes run 260-280 (GSVG…IIYM), 287-307 (IVLG…VIGS), 312-332 (MFAM…GMFF), 348-368 (WAYG…NPAF), and 371-391 (GMML…YFVA).

This sequence belongs to the NqrB/RnfD family. Composed of six subunits; NqrA, NqrB, NqrC, NqrD, NqrE and NqrF. Requires FMN as cofactor.

The protein resides in the cell inner membrane. The enzyme catalyses a ubiquinone + n Na(+)(in) + NADH + H(+) = a ubiquinol + n Na(+)(out) + NAD(+). Functionally, NQR complex catalyzes the reduction of ubiquinone-1 to ubiquinol by two successive reactions, coupled with the transport of Na(+) ions from the cytoplasm to the periplasm. NqrA to NqrE are probably involved in the second step, the conversion of ubisemiquinone to ubiquinol. The polypeptide is Na(+)-translocating NADH-quinone reductase subunit B (Pseudoalteromonas atlantica (strain T6c / ATCC BAA-1087)).